Reading from the N-terminus, the 127-residue chain is Large ribosomal subunit protein bL12 (127 aa).

It belongs to the bacterial ribosomal protein bL12 family. Homodimer. Part of the ribosomal stalk of the 50S ribosomal subunit. Forms a multimeric L10(L12)X complex, where L10 forms an elongated spine to which 2 to 4 L12 dimers bind in a sequential fashion. Binds GTP-bound translation factors.

In terms of biological role, forms part of the ribosomal stalk which helps the ribosome interact with GTP-bound translation factors. Is thus essential for accurate translation. This Streptococcus thermophilus (strain CNRZ 1066) protein is Large ribosomal subunit protein bL12.